Consider the following 217-residue polypeptide: Grancalcin (217 aa).

4 consecutive EF-hand domains span residues 48–83, 89–122, 119–154, and 155–180; these read SSAGDSVYTYFSAVAGQDGEVDAEELQRCLTQSGIN, FSLETCRIMIAMLDRDHTGKMGFNAFKELWAALN, AALNAWKENFMTVDQDGSGTVEHHELRQAIGLMGYR, and LSPQTLTTIVKRYSKNGRIFFDDYVA. Positions 65, 69, and 71 each coordinate Ca(2+). Ca(2+)-binding residues include Asp132, Asp134, Ser136, Thr138, and Glu143.

As to quaternary structure, homodimer. Interacts with SRI and LCP1. Detected in neutrophils and macrophages (at protein level). Highly expressed in bone marrow.

The protein localises to the cytoplasm. Its subcellular location is the cytoplasmic granule membrane. Calcium-binding protein that may play a role in the adhesion of neutrophils to fibronectin. May play a role in the formation of focal adhesions. The sequence is that of Grancalcin (GCA) from Homo sapiens (Human).